The following is a 622-amino-acid chain: Probable potassium transport system protein Kup (622 aa).

Transmembrane regions (helical) follow at residues 8-28 (LAAL…TSVL), 50-70 (VLSV…VVLV), 100-120 (GWLL…GVIT), 137-157 (PHFG…LFAV), 169-189 (FGPV…PHIV), 203-223 (ALGF…AVVL), 247-267 (WFSV…ALLL), 285-305 (ALVP…QALI), 337-357 (IYLP…VVMF), 366-386 (AYGI…FFVI), 392-412 (YPLA…LAFF), and 419-439 (LLQG…LMMT).

This sequence belongs to the HAK/KUP transporter (TC 2.A.72) family.

The protein resides in the cell inner membrane. It catalyses the reaction K(+)(in) + H(+)(in) = K(+)(out) + H(+)(out). Its function is as follows. Transport of potassium into the cell. Likely operates as a K(+):H(+) symporter. The protein is Probable potassium transport system protein Kup of Acidovorax ebreus (strain TPSY) (Diaphorobacter sp. (strain TPSY)).